Reading from the N-terminus, the 391-residue chain is 3-ketoacyl-CoA thiolase (391 aa).

The active-site Acyl-thioester intermediate is cysteine 95. Residues histidine 347 and cysteine 377 each act as proton acceptor in the active site.

This sequence belongs to the thiolase-like superfamily. Thiolase family. Heterotetramer of two alpha chains (FadB) and two beta chains (FadA).

It localises to the cytoplasm. It carries out the reaction an acyl-CoA + acetyl-CoA = a 3-oxoacyl-CoA + CoA. Its pathway is lipid metabolism; fatty acid beta-oxidation. In terms of biological role, catalyzes the final step of fatty acid oxidation in which acetyl-CoA is released and the CoA ester of a fatty acid two carbons shorter is formed. The polypeptide is 3-ketoacyl-CoA thiolase (Pseudomonas aeruginosa (strain ATCC 15692 / DSM 22644 / CIP 104116 / JCM 14847 / LMG 12228 / 1C / PRS 101 / PAO1)).